The primary structure comprises 468 residues: ERO1-like protein alpha (468 aa).

A signal peptide spans 1–23 (MGRRWGFLIGFLVAVGLLGLGHG). Disulfide bonds link Cys-35/Cys-48, Cys-37/Cys-46, Cys-85/Cys-391, Cys-94/Cys-99, Cys-94/Cys-131, Cys-99/Cys-104, Cys-208/Cys-241, and Cys-394/Cys-397. Phosphoserine is present on residues Ser-106, Ser-143, and Ser-145. FAD-binding residues include Arg-187, Thr-189, and Trp-200. 2 residues coordinate FAD: Ser-252 and His-255. N-linked (GlcNAc...) asparagine glycosylation occurs at Asn-280. Residues Arg-287 and Arg-300 each contribute to the FAD site. Asn-384 carries N-linked (GlcNAc...) asparagine glycosylation.

Belongs to the EROs family. As to quaternary structure, predominantly monomer. May function both as a monomer and a homodimer. Interacts with PDILT. Interacts with ERP44; the interaction results in retention of ERO1A in the endoplasmic reticulum. FAD serves as cofactor. Post-translationally, the Cys-94/Cys-99 and Cys-394/Cys-397 disulfide bonds constitute the redox-active center. The Cys-94/Cys-99 disulfide bond may accept electron from P4HB and funnel them to the active site disulfide Cys-394/Cys-397. The regulatory Cys-99/Cys-104 disulfide bond stabilizes the other regulatory bond Cys-94/Cys-131. In terms of processing, phosphorylated on Ser-145 by FAM20C in the Golgi which increases its enzymatic activity. Phosphorylation is induced by lactation. It is also induced by hypoxia and reductive stress.

Its subcellular location is the endoplasmic reticulum membrane. The protein resides in the golgi apparatus lumen. It localises to the secreted. It is found in the cell projection. The protein localises to the dendrite. Enzyme activity is tightly regulated to prevent the accumulation of reactive oxygen species in the endoplasmic reticulum. Reversibly down-regulated by the formation of disulfide bonds between the active site Cys-94 and Cys-131, and between Cys-99 and Cys-104. Glutathione may be required to regulate its activity in the endoplasmic reticulum. Functionally, oxidoreductase involved in disulfide bond formation in the endoplasmic reticulum. Efficiently reoxidizes P4HB/PDI, the enzyme catalyzing protein disulfide formation, in order to allow P4HB to sustain additional rounds of disulfide formation. Following P4HB reoxidation, passes its electrons to molecular oxygen via FAD, leading to the production of reactive oxygen species (ROS) in the cell. Required for the proper folding of immunoglobulins. Plays an important role in ER stress-induced, CHOP-dependent apoptosis by activating the inositol 1,4,5-trisphosphate receptor IP3R1. In Bos taurus (Bovine), this protein is ERO1-like protein alpha.